The chain runs to 486 residues: N-succinylglutamate 5-semialdehyde dehydrogenase (486 aa).

Position 220–225 (220–225) interacts with NAD(+); that stretch reads GSSRTG. Catalysis depends on residues E243 and C277.

The protein belongs to the aldehyde dehydrogenase family. AstD subfamily.

The catalysed reaction is N-succinyl-L-glutamate 5-semialdehyde + NAD(+) + H2O = N-succinyl-L-glutamate + NADH + 2 H(+). The protein operates within amino-acid degradation; L-arginine degradation via AST pathway; L-glutamate and succinate from L-arginine: step 4/5. Catalyzes the NAD-dependent reduction of succinylglutamate semialdehyde into succinylglutamate. This Shewanella woodyi (strain ATCC 51908 / MS32) protein is N-succinylglutamate 5-semialdehyde dehydrogenase.